A 115-amino-acid polypeptide reads, in one-letter code: U3-lycotoxin-Ls1b (115 aa).

An N-terminal signal peptide occupies residues 1–20 (MKFVLLFGVLLVTLFSYSSA). Residues 21–44 (EMLDDFDQADEDELLSLIEKEEAR) constitute a propeptide that is removed on maturation. 4 cysteine pairs are disulfide-bonded: cysteine 48–cysteine 63, cysteine 55–cysteine 72, cysteine 62–cysteine 87, and cysteine 74–cysteine 85.

This sequence belongs to the neurotoxin 19 (CSTX) family. 01 subfamily. As to expression, expressed by the venom gland.

The protein localises to the secreted. The protein is U3-lycotoxin-Ls1b of Lycosa singoriensis (Wolf spider).